Consider the following 187-residue polypeptide: Elongation factor P (187 aa).

The protein belongs to the elongation factor P family.

It localises to the cytoplasm. The protein operates within protein biosynthesis; polypeptide chain elongation. Involved in peptide bond synthesis. Stimulates efficient translation and peptide-bond synthesis on native or reconstituted 70S ribosomes in vitro. Probably functions indirectly by altering the affinity of the ribosome for aminoacyl-tRNA, thus increasing their reactivity as acceptors for peptidyl transferase. The polypeptide is Elongation factor P (Sphingopyxis alaskensis (strain DSM 13593 / LMG 18877 / RB2256) (Sphingomonas alaskensis)).